Reading from the N-terminus, the 61-residue chain is Lens epithelial cell protein LEP503 (61 aa).

The polypeptide is Lens epithelial cell protein LEP503 (Lenep) (Mus musculus (Mouse)).